Reading from the N-terminus, the 113-residue chain is Protein USP1 (113 aa).

Positions 1-18 (MKITMLFAALSAASGAFA) are cleaved as a signal peptide. 6 consecutive repeat copies span residues 32–37 (IGAGVG), 40–45 (IGAGVG), 46–49 (PYGY), 50–53 (PYGA), 59–65 (LQLLPLR), and 69–75 (LQWIPLR). The tract at residues 32-45 (IGAGVGIGIGAGVG) is 2 X 6 AA repeats. The tract at residues 46 to 53 (PYGYPYGA) is 2 X 4 AA approximate tandem repeats. The tract at residues 59 to 75 (LQLLPLRWLSLQWIPLR) is 2 X 7 AA approximate repeats.

Its subcellular location is the secreted. The polypeptide is Protein USP1 (USP1) (Puccinia graminis (Black stem rust fungus)).